The chain runs to 102 residues: Small ribosomal subunit protein eS24 (102 aa).

The protein belongs to the eukaryotic ribosomal protein eS24 family.

The chain is Small ribosomal subunit protein eS24 (rps24e) from Haloarcula marismortui (strain ATCC 43049 / DSM 3752 / JCM 8966 / VKM B-1809) (Halobacterium marismortui).